Here is a 131-residue protein sequence, read N- to C-terminus: Small ribosomal subunit protein uS12 (131 aa).

The interval 1–22 is disordered; sequence MPTTQQLLRKGRKVLQKKSKVP. The span at 9-20 shows a compositional bias: basic residues; that stretch reads RKGRKVLQKKSK. The residue at position 89 (aspartate 89) is a 3-methylthioaspartic acid. Residues 102 to 131 are disordered; it reads LDTQGVKDRNKSRSKYGTKKPKAGAAAAKK. Positions 113–131 are enriched in basic residues; the sequence is SRSKYGTKKPKAGAAAAKK.

This sequence belongs to the universal ribosomal protein uS12 family. Part of the 30S ribosomal subunit. Contacts proteins S8 and S17. May interact with IF1 in the 30S initiation complex.

Functionally, with S4 and S5 plays an important role in translational accuracy. Interacts with and stabilizes bases of the 16S rRNA that are involved in tRNA selection in the A site and with the mRNA backbone. Located at the interface of the 30S and 50S subunits, it traverses the body of the 30S subunit contacting proteins on the other side and probably holding the rRNA structure together. The combined cluster of proteins S8, S12 and S17 appears to hold together the shoulder and platform of the 30S subunit. The sequence is that of Small ribosomal subunit protein uS12 from Deinococcus radiodurans (strain ATCC 13939 / DSM 20539 / JCM 16871 / CCUG 27074 / LMG 4051 / NBRC 15346 / NCIMB 9279 / VKM B-1422 / R1).